Reading from the N-terminus, the 135-residue chain is uncharacterized protein (135 aa).

The disordered stretch occupies residues 100–125; the sequence is KESPATSSEDISSCSDCDSERLQSDD. Low complexity predominate over residues 106–115; the sequence is SSEDISSCSD.

This is an uncharacterized protein from Microplitis demolitor (Parasitoid wasp).